A 584-amino-acid chain; its full sequence is ATP synthase subunit alpha, mitochondrial (584 aa).

Residues 1–24 (MRRFGSKFASGLASRCALACPLAS) constitute a mitochondrion transit peptide. ATP is bound by residues 207 to 214 (DRQTGKTS) and Gln-464.

It belongs to the ATPase alpha/beta chains family. As to quaternary structure, F-type ATPases have 2 components, F(1) - the catalytic core - and F(o) - the membrane proton channel. F(1) has five subunits: alpha(3), beta(3), gamma(1), delta(1), epsilon(1), plus the additional subunit P18 (Tb427.05.1710) that is not present in F(1)F(o) ATP synthase from metazoa. Subunit P18 (Tb927.5.1710) interacts with the alpha subunit with a 1:1 stoichiometry; the interaction is direct. Subunit gamma is part of the central stalk. F(o) has three main subunits: a, b and c. The trypanosomal ATPase complex contains additional subunits that are not present in the F(1)F(o) ATP synthase from metazoa.

The protein localises to the mitochondrion. Its subcellular location is the mitochondrion inner membrane. In terms of biological role, mitochondrial membrane ATP synthase (F(1)F(o) ATP synthase) produces ATP from ADP in the presence of a proton gradient across the membrane which is generated by electron transport complexes of the respiratory chain. F-type ATPases consist of two structural domains, F(1) - containing the extramembraneous catalytic core, and F(o) - containing the membrane proton channel, linked together by a central stalk and a peripheral stalk. During catalysis, ATP synthesis in the catalytic domain of F(1) is coupled via a rotary mechanism of the central stalk subunits to proton translocation. Subunits alpha and beta form the catalytic core in F(1). Rotation of the central stalk against the surrounding alpha(3)beta(3) subunits leads to hydrolysis of ATP in three separate catalytic sites on the beta subunits. Subunit alpha does not bear the catalytic high-affinity ATP-binding sites. Contrary to the procyclic, insect form that requires F(1)F(o) ATP synthase for ATP synthesis, the bloodstream form relies on ATP hydrolysis by F(1)F(o) ATP synthase to maintain its mitochondrial membrane potential. The sequence is that of ATP synthase subunit alpha, mitochondrial from Trypanosoma brucei brucei.